The following is a 266-amino-acid chain: Ribonuclease 3 (266 aa).

The RNase III domain occupies 8–130 (LARLTKKLGY…IIGAVYLDSN (123 aa)). Glu-43 is a binding site for Mg(2+). Asp-47 is a catalytic residue. Mg(2+) contacts are provided by Asp-116 and Glu-119. Glu-119 is a catalytic residue. One can recognise a DRBM domain in the interval 157–227 (DPKTRLQEFL…AQQILALIEK (71 aa)). The tract at residues 229–266 (REQEKEVKIKPTKQAKLANPRHTKSNPSSSSKKSSTRK) is disordered. A compositionally biased stretch (low complexity) spans 253-266 (SNPSSSSKKSSTRK).

Belongs to the ribonuclease III family. In terms of assembly, homodimer. Mg(2+) serves as cofactor.

Its subcellular location is the cytoplasm. The catalysed reaction is Endonucleolytic cleavage to 5'-phosphomonoester.. Its function is as follows. Digests double-stranded RNA. Involved in the processing of primary rRNA transcript to yield the immediate precursors to the large and small rRNAs (23S and 16S). Processes some mRNAs, and tRNAs when they are encoded in the rRNA operon. Processes pre-crRNA and tracrRNA of type II CRISPR loci if present in the organism. In Colwellia psychrerythraea (strain 34H / ATCC BAA-681) (Vibrio psychroerythus), this protein is Ribonuclease 3.